We begin with the raw amino-acid sequence, 83 residues long: MSFFQLLMKRKELIPLVVFMTVAAGGASSFAVYSLWKTDVILDRKKNPEPWETVDPTVPQKLITINQQWKPIEELQNVQRVTK.

Belongs to the complex I NDUFA4 subunit family. As to expression, expressed mainly in stomach, placenta, small intestine and colon, as well as in normal mucosa of esophagus. Down-regulated in esophageal squamous cell carcinoma.

The protein localises to the nucleus. The polypeptide is Normal mucosa of esophagus-specific gene 1 protein (NMES1) (Homo sapiens (Human)).